Reading from the N-terminus, the 58-residue chain is Sperm protamine P2 (58 aa).

The disordered stretch occupies residues 1–58 (RRRRRRGKGRGKKRKGKGKKRGKGRRRGSKGRKKKKGKGKKRKRRRRRRRKGSKGKGK).

In terms of tissue distribution, gonads.

The protein localises to the nucleus. Its subcellular location is the chromosome. In terms of biological role, protamines substitute for histones in the chromatin of sperm during the haploid phase of spermatogenesis. They compact sperm DNA into a highly condensed, stable and inactive complex. In Bolinus brandaris (Purple dye murex), this protein is Sperm protamine P2.